The primary structure comprises 313 residues: Ribosomal RNA small subunit methyltransferase H (313 aa).

S-adenosyl-L-methionine-binding positions include 35 to 37 (GGH), aspartate 55, phenylalanine 79, aspartate 100, and glutamine 107.

Belongs to the methyltransferase superfamily. RsmH family.

Its subcellular location is the cytoplasm. It carries out the reaction cytidine(1402) in 16S rRNA + S-adenosyl-L-methionine = N(4)-methylcytidine(1402) in 16S rRNA + S-adenosyl-L-homocysteine + H(+). Functionally, specifically methylates the N4 position of cytidine in position 1402 (C1402) of 16S rRNA. This is Ribosomal RNA small subunit methyltransferase H from Burkholderia vietnamiensis (strain G4 / LMG 22486) (Burkholderia cepacia (strain R1808)).